The chain runs to 307 residues: Fructokinase (307 aa).

Belongs to the carbohydrate kinase PfkB family.

The enzyme catalyses D-fructose + ATP = D-fructose 6-phosphate + ADP + H(+). This chain is Fructokinase (cscK), found in Escherichia coli.